A 488-amino-acid polypeptide reads, in one-letter code: N-succinylglutamate 5-semialdehyde dehydrogenase (488 aa).

221-226 (GSSRTG) provides a ligand contact to NAD(+). Residues E244 and C278 contribute to the active site.

Belongs to the aldehyde dehydrogenase family. AstD subfamily.

The catalysed reaction is N-succinyl-L-glutamate 5-semialdehyde + NAD(+) + H2O = N-succinyl-L-glutamate + NADH + 2 H(+). Its pathway is amino-acid degradation; L-arginine degradation via AST pathway; L-glutamate and succinate from L-arginine: step 4/5. Catalyzes the NAD-dependent reduction of succinylglutamate semialdehyde into succinylglutamate. The sequence is that of N-succinylglutamate 5-semialdehyde dehydrogenase from Pseudomonas syringae pv. syringae (strain B728a).